The chain runs to 130 residues: Small ribosomal subunit protein uS9 (130 aa).

It belongs to the universal ribosomal protein uS9 family.

The sequence is that of Small ribosomal subunit protein uS9 from Pectobacterium atrosepticum (strain SCRI 1043 / ATCC BAA-672) (Erwinia carotovora subsp. atroseptica).